The chain runs to 179 residues: UPF0134 protein MPN_145 (179 aa).

Belongs to the UPF0134 family.

The sequence is that of UPF0134 protein MPN_145 from Mycoplasma pneumoniae (strain ATCC 29342 / M129 / Subtype 1) (Mycoplasmoides pneumoniae).